A 429-amino-acid polypeptide reads, in one-letter code: Enolase (429 aa).

A (2R)-2-phosphoglycerate-binding site is contributed by Gln163. The active-site Proton donor is the Glu205. Mg(2+) contacts are provided by Asp242, Glu285, and Asp312. Positions 337, 366, 367, and 388 each coordinate (2R)-2-phosphoglycerate. Lys337 (proton acceptor) is an active-site residue.

Belongs to the enolase family. Mg(2+) is required as a cofactor.

It is found in the cytoplasm. It localises to the secreted. The protein localises to the cell surface. It carries out the reaction (2R)-2-phosphoglycerate = phosphoenolpyruvate + H2O. It participates in carbohydrate degradation; glycolysis; pyruvate from D-glyceraldehyde 3-phosphate: step 4/5. In terms of biological role, catalyzes the reversible conversion of 2-phosphoglycerate (2-PG) into phosphoenolpyruvate (PEP). It is essential for the degradation of carbohydrates via glycolysis. This is Enolase from Methylorubrum extorquens (strain PA1) (Methylobacterium extorquens).